A 217-amino-acid chain; its full sequence is ATP phosphoribosyltransferase (217 aa).

The protein belongs to the ATP phosphoribosyltransferase family. Short subfamily. As to quaternary structure, heteromultimer composed of HisG and HisZ subunits.

The protein localises to the cytoplasm. The catalysed reaction is 1-(5-phospho-beta-D-ribosyl)-ATP + diphosphate = 5-phospho-alpha-D-ribose 1-diphosphate + ATP. It participates in amino-acid biosynthesis; L-histidine biosynthesis; L-histidine from 5-phospho-alpha-D-ribose 1-diphosphate: step 1/9. Catalyzes the condensation of ATP and 5-phosphoribose 1-diphosphate to form N'-(5'-phosphoribosyl)-ATP (PR-ATP). Has a crucial role in the pathway because the rate of histidine biosynthesis seems to be controlled primarily by regulation of HisG enzymatic activity. In Synechococcus sp. (strain WH7803), this protein is ATP phosphoribosyltransferase.